Consider the following 981-residue polypeptide: Mediator of RNA polymerase II transcription subunit 5 (981 aa).

Belongs to the Mediator complex subunit 5 family. In terms of assembly, component of the Mediator complex.

It localises to the nucleus. Its function is as follows. Component of the Mediator complex, a coactivator involved in the regulated transcription of nearly all RNA polymerase II-dependent genes. Mediator functions as a bridge to convey information from gene-specific regulatory proteins to the basal RNA polymerase II transcription machinery. Mediator is recruited to promoters by direct interactions with regulatory proteins and serves as a scaffold for the assembly of a functional preinitiation complex with RNA polymerase II and the general transcription factors. The chain is Mediator of RNA polymerase II transcription subunit 5 (NUT1) from Scheffersomyces stipitis (strain ATCC 58785 / CBS 6054 / NBRC 10063 / NRRL Y-11545) (Yeast).